The sequence spans 315 residues: Lipoyl synthase (315 aa).

7 residues coordinate [4Fe-4S] cluster: cysteine 62, cysteine 67, cysteine 73, cysteine 88, cysteine 92, cysteine 95, and serine 302. The 219-residue stretch at 74 to 292 (FNHGTATFMI…KIALKLGFIR (219 aa)) folds into the Radical SAM core domain.

It belongs to the radical SAM superfamily. Lipoyl synthase family. Requires [4Fe-4S] cluster as cofactor.

The protein localises to the cytoplasm. The enzyme catalyses [[Fe-S] cluster scaffold protein carrying a second [4Fe-4S](2+) cluster] + N(6)-octanoyl-L-lysyl-[protein] + 2 oxidized [2Fe-2S]-[ferredoxin] + 2 S-adenosyl-L-methionine + 4 H(+) = [[Fe-S] cluster scaffold protein] + N(6)-[(R)-dihydrolipoyl]-L-lysyl-[protein] + 4 Fe(3+) + 2 hydrogen sulfide + 2 5'-deoxyadenosine + 2 L-methionine + 2 reduced [2Fe-2S]-[ferredoxin]. Its pathway is protein modification; protein lipoylation via endogenous pathway; protein N(6)-(lipoyl)lysine from octanoyl-[acyl-carrier-protein]: step 2/2. In terms of biological role, catalyzes the radical-mediated insertion of two sulfur atoms into the C-6 and C-8 positions of the octanoyl moiety bound to the lipoyl domains of lipoate-dependent enzymes, thereby converting the octanoylated domains into lipoylated derivatives. This chain is Lipoyl synthase, found in Vesicomyosocius okutanii subsp. Calyptogena okutanii (strain HA).